The following is a 153-amino-acid chain: Ribosome maturation factor RimP (153 aa).

This sequence belongs to the RimP family.

The protein resides in the cytoplasm. In terms of biological role, required for maturation of 30S ribosomal subunits. The polypeptide is Ribosome maturation factor RimP (Clostridium botulinum (strain 657 / Type Ba4)).